The chain runs to 576 residues: POU domain, class 6, transcription factor 1 (576 aa).

Residues 65–88 form a disordered region; sequence PAEAGSCDPDHSAEATVAARSPSE. The 75-residue stretch at 414–488 folds into the POU-specific domain; sequence EDGINLEEIR…VLEKWLMEAE (75 aa). Residues 509–568 constitute a DNA-binding region (homeobox); it reads KRKRRTSFTPQAIEALNAYFEKNPLPTGQEITEIAKELNYDREVVRVWFCNRRQTLKNTS.

It belongs to the POU transcription factor family. Class-6 subfamily. In terms of tissue distribution, isoform C1 and isoform C2 are found in the brain, while isoform C7 is found in the testis.

It localises to the nucleus. Its function is as follows. Transcription factor that binds preferentially to a variant of the octamer motif (5'-ATGATAAT-3'). The chain is POU domain, class 6, transcription factor 1 (Pou6f1) from Mus musculus (Mouse).